We begin with the raw amino-acid sequence, 257 residues long: tRNA uridine(34) hydroxylase (257 aa).

In terms of domain architecture, Rhodanese spans Asn-128–Tyr-222. Cys-182 (cysteine persulfide intermediate) is an active-site residue.

This sequence belongs to the TrhO family.

It carries out the reaction uridine(34) in tRNA + AH2 + O2 = 5-hydroxyuridine(34) in tRNA + A + H2O. Functionally, catalyzes oxygen-dependent 5-hydroxyuridine (ho5U) modification at position 34 in tRNAs. The protein is tRNA uridine(34) hydroxylase of Xylella fastidiosa (strain 9a5c).